The primary structure comprises 266 residues: UPF0294 protein YafD (266 aa).

It belongs to the UPF0294 family.

The protein localises to the cytoplasm. This is UPF0294 protein YafD (yafD) from Escherichia coli O157:H7.